We begin with the raw amino-acid sequence, 197 residues long: dCTP deaminase (197 aa).

105–110 (RSSIAR) contacts dCTP. Catalysis depends on glutamate 133, which acts as the Proton donor/acceptor. Tyrosine 166 and glutamine 177 together coordinate dCTP. Positions 172 to 197 (NKYAGQKDPKPSRLAEELSLEQLRGR) are disordered. Basic and acidic residues predominate over residues 176–187 (GQKDPKPSRLAE).

It belongs to the dCTP deaminase family. In terms of assembly, homotrimer.

It catalyses the reaction dCTP + H2O + H(+) = dUTP + NH4(+). The protein operates within pyrimidine metabolism; dUMP biosynthesis; dUMP from dCTP (dUTP route): step 1/2. In terms of biological role, catalyzes the deamination of dCTP to dUTP. The chain is dCTP deaminase from Thermomicrobium roseum (strain ATCC 27502 / DSM 5159 / P-2).